Reading from the N-terminus, the 375-residue chain is tRNA-specific 2-thiouridylase MnmA (375 aa).

ATP contacts are provided by residues 17–24 (GMSGGVDS) and M43. Residues 103-105 (NPD) are interaction with target base in tRNA. The active-site Nucleophile is the C108. C108 and C204 are joined by a disulfide. Position 132 (G132) interacts with ATP. Residues 154–156 (KDQ) form an interaction with tRNA region. C204 (cysteine persulfide intermediate) is an active-site residue. The interval 316 to 317 (RY) is interaction with tRNA.

Belongs to the MnmA/TRMU family.

It is found in the cytoplasm. It carries out the reaction S-sulfanyl-L-cysteinyl-[protein] + uridine(34) in tRNA + AH2 + ATP = 2-thiouridine(34) in tRNA + L-cysteinyl-[protein] + A + AMP + diphosphate + H(+). In terms of biological role, catalyzes the 2-thiolation of uridine at the wobble position (U34) of tRNA, leading to the formation of s(2)U34. This is tRNA-specific 2-thiouridylase MnmA from Stutzerimonas stutzeri (strain A1501) (Pseudomonas stutzeri).